The primary structure comprises 356 residues: Tyrosine recombinase XerS (356 aa).

In terms of domain architecture, Core-binding (CB) spans 16–121 (IMPWYVLDYY…ALSSLYKYLT (106 aa)). In terms of domain architecture, Tyr recombinase spans 169-354 (AFLDYVDKEY…VNDEQKNALD (186 aa)). Catalysis depends on residues R210, K234, H306, R309, and H332. Residue Y341 is the O-(3'-phospho-DNA)-tyrosine intermediate of the active site.

Belongs to the 'phage' integrase family. XerS subfamily.

It is found in the cytoplasm. With respect to regulation, ftsK is required for recombination. Its function is as follows. Site-specific tyrosine recombinase, which acts by catalyzing the cutting and rejoining of the recombining DNA molecules. Essential to convert dimers of the bacterial chromosome into monomers to permit their segregation at cell division. This chain is Tyrosine recombinase XerS, found in Streptococcus pyogenes serotype M49 (strain NZ131).